Reading from the N-terminus, the 157-residue chain is RxLR effector protein PITG_04049 (157 aa).

An N-terminal signal peptide occupies residues Met-1 to Ser-23. The RxLR-dEER signature appears at Gln-51–Arg-65.

This sequence belongs to the RxLR effector family.

Its subcellular location is the secreted. The protein localises to the host cytoplasm. It localises to the host nucleus. In terms of biological role, effector that might be involved in host plant infection. The protein is RxLR effector protein PITG_04049 of Phytophthora infestans (strain T30-4) (Potato late blight agent).